The primary structure comprises 479 residues: PTS system MurNAc-GlcNAc-specific EIIBC component (479 aa).

The PTS EIIB type-1 domain maps to 5–87 (QILAEHIIDA…SELSGAPLGE (83 aa)). Cys27 functions as the Phosphocysteine intermediate; for EIIB activity in the catalytic mechanism. In terms of domain architecture, PTS EIIC type-1 spans 125-479 (KTIANIFIPL…AMRESDTLGD (355 aa)). 10 consecutive transmembrane segments (helical) span residues 130–150 (IFIP…IAAV), 169–189 (VTVF…FTGI), 195–215 (FGAT…TGLT), 229–249 (LQPG…LSII), 269–289 (ITLF…AGFV), 303–323 (IGGV…VMLG), 344–364 (LLPI…ALWV), 379–399 (ALPV…TLPL), 403–423 (FITA…IGHI), and 445–465 (LGYI…TYFF).

The protein resides in the cell membrane. The catalysed reaction is N-acetyl-beta-D-muramate-(1-&gt;4)-N-acetyl-D-glucosamine(out) + N(pros)-phospho-L-histidyl-[protein] = 6-phospho-N-acetyl-beta-D-muramate-(1-&gt;4)-N-acetyl-D-glucosamine(in) + L-histidyl-[protein]. The protein operates within cell wall biogenesis; peptidoglycan recycling. Functionally, the phosphoenolpyruvate-dependent sugar phosphotransferase system (sugar PTS), a major carbohydrate active transport system, catalyzes the phosphorylation of incoming sugar substrates concomitantly with their translocation across the cell membrane. This system is involved in the uptake and phosphorylation of MurNAc-GlcNAc, the principle peptidoglycan turnover product of S.aureus, yielding cytoplasmic MurNAc 6P-GlcNAc. The sequence is that of PTS system MurNAc-GlcNAc-specific EIIBC component from Staphylococcus saprophyticus subsp. saprophyticus (strain ATCC 15305 / DSM 20229 / NCIMB 8711 / NCTC 7292 / S-41).